The sequence spans 179 residues: Large ribosomal subunit protein uL5 (179 aa).

Belongs to the universal ribosomal protein uL5 family. Part of the 50S ribosomal subunit; part of the 5S rRNA/L5/L18/L25 subcomplex. Contacts the 5S rRNA and the P site tRNA. Forms a bridge to the 30S subunit in the 70S ribosome.

This is one of the proteins that bind and probably mediate the attachment of the 5S RNA into the large ribosomal subunit, where it forms part of the central protuberance. In the 70S ribosome it contacts protein S13 of the 30S subunit (bridge B1b), connecting the 2 subunits; this bridge is implicated in subunit movement. Contacts the P site tRNA; the 5S rRNA and some of its associated proteins might help stabilize positioning of ribosome-bound tRNAs. This is Large ribosomal subunit protein uL5 from Prochlorococcus marinus (strain MIT 9313).